Consider the following 171-residue polypeptide: MPRYAIIDSDTASDDTIAILLASKFFKLLGITIVAGNVKFENEIKNALFTVEYFNLDVPVFIGSSRPIMGKWSTVEEVHGNNGIGDWKIEEPKISPEKEHAIDAIIRLSKEYEGELEILAVSPLTNLALAYLKDPTIVKRIKKVWIMGGAFSRGNTTPIAEFNFWVDPEAA.

This sequence belongs to the IUNH family.

This is an uncharacterized protein from Acidianus ambivalens (Desulfurolobus ambivalens).